We begin with the raw amino-acid sequence, 1392 residues long: DNA-directed RNA polymerase subunit beta (1392 aa).

It belongs to the RNA polymerase beta chain family. In terms of assembly, the RNAP catalytic core consists of 2 alpha, 1 beta, 1 beta' and 1 omega subunit. When a sigma factor is associated with the core the holoenzyme is formed, which can initiate transcription.

It catalyses the reaction RNA(n) + a ribonucleoside 5'-triphosphate = RNA(n+1) + diphosphate. DNA-dependent RNA polymerase catalyzes the transcription of DNA into RNA using the four ribonucleoside triphosphates as substrates. The polypeptide is DNA-directed RNA polymerase subunit beta (Neisseria gonorrhoeae (strain NCCP11945)).